The primary structure comprises 2611 residues: Highly reducing polyketide synthase ATEG_07659 (2611 aa).

The Ketosynthase family 3 (KS3) domain occupies 10–409 (SEPIAIIGLS…GTNSHVIVEG (400 aa)). Residues cysteine 157, histidine 292, and histidine 330 each act as for beta-ketoacyl synthase activity in the active site. Residues 537 to 844 (MVFTGQGAQW…VRFVEAFTDM (308 aa)) are malonyl-CoA:ACP transacylase (MAT) domain. The N-terminal hotdog fold stretch occupies residues 969-1109 (HDLLGVLVPG…GLITVQMAAD (141 aa)). The 324-residue stretch at 969-1292 (HDLLGVLVPG…CQSLGRSAPG (324 aa)) folds into the PKS/mFAS DH domain. The interval 970 to 1289 (DLLGVLVPGT…GLVCQSLGRS (320 aa)) is dehydratase (DH) domain. Residue histidine 1001 is the Proton acceptor; for dehydratase activity of the active site. The interval 1128-1292 (GYTRRIDPQD…CQSLGRSAPG (165 aa)) is C-terminal hotdog fold. The active-site Proton donor; for dehydratase activity is the aspartate 1199. Residues 1469 to 1602 (FGQLKSLLAA…GATLLLMETT (134 aa)) are methyltransferase (CMet) domain. The interval 1898–2213 (GLLDTLAFGD…TGKHLGKLVL (316 aa)) is enoyl reductase (ER) domain. The segment at 2236 to 2416 (ASYLLVGGVG…AVSLDMGVIK (181 aa)) is ketoreductase (KR) domain. A compositionally biased stretch (low complexity) spans 2499 to 2509 (SRAQAQQAGGD). The segment at 2499-2520 (SRAQAQQAGGDSDSEPLSAKLR) is disordered. One can recognise a Carrier domain in the interval 2527-2604 (AAARCVGDAI…ALALDVVAKS (78 aa)). Residue serine 2564 is modified to O-(pantetheine 4'-phosphoryl)serine.

Its pathway is secondary metabolite biosynthesis. Its function is as follows. Highly reducing polyketide synthase; part of the cluster B that mediates the biosynthesis of azasperpyranones, members of the azaphilone family that exhibit anti-cancer activities. Azasperpyranones are synthesized by 2 clusters, A and B. Cluster A is responsible for the production of the polyhydric phenol moiety while the azaphilonoid scaffold is produced by the cluster B. The non-reducing polyketide synthase ATEG_03629 produces 5-methyl orsellinic acid, which is then reduced to 5-methyl orsellinic aldehyde by the NRPS-like protein ATEG_03630. 5-methyl orsellinic aldehyde is then first hydroxylated by the FAD-dependent monooxygenase ATEG_03635 and subsequently hydroxylated by the cytochrome P450 monooxygenase ATEG_03631 to produce the unstable polyhydric phenol precursor of azasperpyranones. On the other hand, the polyketide synthase ATEG_07659 is responsible for producing the 3,5-dimethyloctadienone moiety from acetyl-CoA, three malonyl-CoA, and two S-adenosyl methionines (SAM). The 3,5-dimethyloctadienone moiety is then loaded onto the SAT domain of ATEG_07661 and extended with four malonyl-CoA and one SAM, which leads to the formation of 2,4-dihydroxy-6-(5,7-dimethyl-2-oxo-trans-3-trans-5-nonadienyl)-3-methylbenzaldehyde (compound 8) after reductive release and aldol condensation. The FAD-dependent monooxygenase ATEG_07662 is the next enzyme in the biosynthesis sequence and hydroxylates the side chain at the benzylic position of compound 8. In Aspergillus nidulans, afoF, the ortholog of the FAD-dependent oxygenase ATEG_07660, is the key enzyme for the biosynthesis of asperfuranone by catalyzing the hydroxylation at C-8 of to prevent the formation of a six-membered ring hemiacetal intermediate and thus facilitating the formation of a five-membered ring to produce asperfuranone. In Aspergillus terreus, ATEG_07660 is probably not functional, which leads to the formation of the six-membered ring hemiacetal intermediate presperpyranone instead of asperfuranone. Finally, ATEG_03636 is involved in the condensation of the polyhydric phenol moiety produced by cluster A and the perasperpyranone precursor produced by cluster B, to yield azasperpyranone A. Further modifications of azasperpyranone A result in the production of derivatives, including azasperpyranone B to F. This Aspergillus terreus (strain NIH 2624 / FGSC A1156) protein is Highly reducing polyketide synthase ATEG_07659.